Consider the following 360-residue polypeptide: MFLWLAHFSNWLTGLNIFQYTTFRAVMAALTALAFSLMFGPWTIRRLTALKCGQAVRTDGPQTHLVKNGTPTMGGSLILTAITVSTLLWGNWANPYIWILLGVLLATGALGFYDDWRKVVYKDPNGVSAKFKMVWQSSVAIIAGLALFYLAANSANNILIVPFFKQIALPLGVVGFLVLSYLTIVGTSNAVNLTDGLDGLATFPVVLVAAGLAIFAYVSGHYQFSQYLQLPYVAGANEVAIFCTAMCGACLGFLWFNAYPAQVFMGDVGALALGAALGTVAVIVRQEFVLVIMGGLFVVEAVSVMLQVGWYKKTKKRIFLMAPIHHHYEQKGWKETQVVVRFWIITIVLVLIGLSTLKIR.

Transmembrane regions (helical) follow at residues 24 to 44 (RAVM…PWTI), 69 to 89 (GTPT…TLLW), 92 to 112 (WANP…ALGF), 133 to 153 (MVWQ…LAAN), 158 to 178 (ILIV…GFLV), 199 to 219 (GLAT…AYVS), 239 to 259 (VAIF…FNAY), 263 to 283 (VFMG…VAVI), 288 to 308 (FVLV…MLQV), and 337 to 357 (QVVV…LSTL).

This sequence belongs to the glycosyltransferase 4 family. MraY subfamily. It depends on Mg(2+) as a cofactor.

Its subcellular location is the cell inner membrane. The enzyme catalyses UDP-N-acetyl-alpha-D-muramoyl-L-alanyl-gamma-D-glutamyl-meso-2,6-diaminopimeloyl-D-alanyl-D-alanine + di-trans,octa-cis-undecaprenyl phosphate = di-trans,octa-cis-undecaprenyl diphospho-N-acetyl-alpha-D-muramoyl-L-alanyl-D-glutamyl-meso-2,6-diaminopimeloyl-D-alanyl-D-alanine + UMP. The protein operates within cell wall biogenesis; peptidoglycan biosynthesis. In terms of biological role, catalyzes the initial step of the lipid cycle reactions in the biosynthesis of the cell wall peptidoglycan: transfers peptidoglycan precursor phospho-MurNAc-pentapeptide from UDP-MurNAc-pentapeptide onto the lipid carrier undecaprenyl phosphate, yielding undecaprenyl-pyrophosphoryl-MurNAc-pentapeptide, known as lipid I. In Neisseria meningitidis serogroup C (strain 053442), this protein is Phospho-N-acetylmuramoyl-pentapeptide-transferase.